We begin with the raw amino-acid sequence, 75 residues long: Translational regulator CsrA (75 aa).

This sequence belongs to the CsrA/RsmA family. Homodimer; the beta-strands of each monomer intercalate to form a hydrophobic core, while the alpha-helices form wings that extend away from the core.

The protein resides in the cytoplasm. Functionally, a translational regulator that binds mRNA to regulate translation initiation and/or mRNA stability. Usually binds in the 5'-UTR at or near the Shine-Dalgarno sequence preventing ribosome-binding, thus repressing translation. Its main target seems to be the major flagellin gene, while its function is anatagonized by FliW. This is Translational regulator CsrA from Acetivibrio thermocellus (strain ATCC 27405 / DSM 1237 / JCM 9322 / NBRC 103400 / NCIMB 10682 / NRRL B-4536 / VPI 7372) (Clostridium thermocellum).